Here is a 536-residue protein sequence, read N- to C-terminus: Plasmepsin V (536 aa).

The N-terminal stretch at 1–34 (MVGASLGPPGRGSLSRLIRLVICVLTLCALSVQG) is a signal peptide. At 35–492 (RSESTEGHSK…RKDNIFLKIP (458 aa)) the chain is on the lumenal side. The 401-residue stretch at 62 to 462 (YFLDIDIGTP…DIQKNRIGFV (401 aa)) folds into the Peptidase A1 domain. Residue Asp-80 is part of the active site. Disulfide bonds link Cys-90–Cys-172, Cys-93–Cys-96, Cys-117–Cys-128, Cys-122–Cys-133, Cys-220–Cys-466, Cys-337–Cys-382, and Cys-391–Cys-427. Positions 244 to 258 (SKSVSGQGSGPVSES) are enriched in low complexity. The interval 244–264 (SKSVSGQGSGPVSESLSESGE) is disordered. Asp-313 is a catalytic residue. The chain crosses the membrane as a helical span at residues 493–513 (FFYLYSLFVVFALSVLLSLVF). The Cytoplasmic segment spans residues 514-536 (YVRRLYHMEYSPLPSEGKAPADA).

This sequence belongs to the peptidase A1 family. As to quaternary structure, component of a complex composed of SPC25 and PMV; the interaction is mediated via the transmembrane domains. The complex interacts with the SEC61 channel-forming translocon complex and is involved in the recognition and import of PEXEL motif-containing proteins into the ER for subsequent export. Post-translationally, it is not clear if the zymogen has a cleavable propeptide. Cleavage of the putative propeptide is dispensable for catalytic activity.

It localises to the endoplasmic reticulum membrane. With respect to regulation, inhibited by peptidomimetic inhibitors such as WEHI-842. In terms of biological role, during the asexual blood stage, plays an essential role in the export of several proteins into the host erythrocytes by cleaving the pentameric localization motif RxLxE/Q/D (termed Plasmodium export element (PEXEL)) located downstream of the N-terminal secretory signal sequence. Specifically, cleaves after the leucine residue in the RxLxE/Q/D (or RxLxxE) motif of exported proteins including EMP1. Also, by regulating protein export, plays an essential role in gametocyte development and thus parasite transmission to the mosquito vector. In Plasmodium vivax (strain Salvador I), this protein is Plasmepsin V.